The primary structure comprises 33 residues: uncharacterized protein (33 aa).

The disordered stretch occupies residues M1–K33.

This is an uncharacterized protein from Mycobacterium tuberculosis (strain CDC 1551 / Oshkosh).